The following is a 620-amino-acid chain: 1-deoxy-D-xylulose-5-phosphate synthase (620 aa).

Residues His-80 and 121 to 123 (GHS) each bind thiamine diphosphate. Asp-152 is a binding site for Mg(2+). Thiamine diphosphate is bound by residues 153 to 154 (GA), Asn-181, Tyr-288, and Glu-370. Asn-181 provides a ligand contact to Mg(2+).

Belongs to the transketolase family. DXPS subfamily. In terms of assembly, homodimer. Mg(2+) serves as cofactor. It depends on thiamine diphosphate as a cofactor.

The catalysed reaction is D-glyceraldehyde 3-phosphate + pyruvate + H(+) = 1-deoxy-D-xylulose 5-phosphate + CO2. It participates in metabolic intermediate biosynthesis; 1-deoxy-D-xylulose 5-phosphate biosynthesis; 1-deoxy-D-xylulose 5-phosphate from D-glyceraldehyde 3-phosphate and pyruvate: step 1/1. Its function is as follows. Catalyzes the acyloin condensation reaction between C atoms 2 and 3 of pyruvate and glyceraldehyde 3-phosphate to yield 1-deoxy-D-xylulose-5-phosphate (DXP). This is 1-deoxy-D-xylulose-5-phosphate synthase from Salmonella paratyphi A (strain ATCC 9150 / SARB42).